We begin with the raw amino-acid sequence, 202 residues long: Oocyte-secreted protein 1 (202 aa).

The first 21 residues, 1-21, serve as a signal peptide directing secretion; sequence MKPFVGLLGLLLLLSFMKTCA. The disordered stretch occupies residues 157-183; the sequence is QPNLSTSSEDHHVSTEPWASETSRSEA.

It belongs to the PLAC1 family. In terms of tissue distribution, expressed in oocytes in primary through antral-stage follicles. Expressed in liver and ovary.

It localises to the secreted. Its function is as follows. May be involved in cell differentiation. This is Oocyte-secreted protein 1 (Oosp1) from Mus musculus (Mouse).